An 80-amino-acid chain; its full sequence is Putative membrane protein insertion efficiency factor (80 aa).

Positions 61 to 80 (KTGKDPVPDHFSLKRNQEGE) are disordered. Residues 62–80 (TGKDPVPDHFSLKRNQEGE) show a composition bias toward basic and acidic residues.

This sequence belongs to the UPF0161 family.

Its subcellular location is the cell membrane. Could be involved in insertion of integral membrane proteins into the membrane. This is Putative membrane protein insertion efficiency factor from Streptococcus pneumoniae serotype 2 (strain D39 / NCTC 7466).